The chain runs to 771 residues: Receptor like protein 22 (771 aa).

The N-terminal stretch at 1-20 is a signal peptide; it reads MSNLRLRLLSLVSILYCIAA. The Extracellular portion of the chain corresponds to 21-729; sequence LRCRPDQTET…EEEEILEWRA (709 aa). N-linked (GlcNAc...) asparagine glycans are attached at residues asparagine 46, asparagine 58, asparagine 80, asparagine 93, asparagine 134, and asparagine 158. LRR repeat units follow at residues 86 to 110, 112 to 135, 136 to 159, 160 to 183, 185 to 206, 207 to 230, 232 to 254, 255 to 281, 283 to 303, 304 to 327, 329 to 350, and 353 to 377; these read LSHLRYLNLSFNNFDSSPLSSAFGQ, NNLEVLLLSSNGFTGQVPSSIRNL, TKLTQLNLPHNKLTGDLPSLVQNL, TKLLALDLSYNQFSGTIPSSFFTM, FLSYLDLSENHLTGSFEISNSS, SKLENLNLGNNHFETEIIDPVLRL, NLRYLSLSFLNTSHPIDLSIFSP, LQSLTHLDLHGNSLTLTSVYSDIDFPK, MEILLLSGCNISEFPRFLKSL, KKLWYLDLSSNRIKGNVPDWIWSL, LLVSLDLSNNSFTGFNGSLDHV, and NSSVQVLDIALNSFKGSFPNPPVSI. Asparagine 204 carries an N-linked (GlcNAc...) asparagine glycan. Asparagine 242 carries N-linked (GlcNAc...) asparagine glycosylation. N-linked (GlcNAc...) asparagine glycosylation occurs at asparagine 292. N-linked (GlcNAc...) asparagine glycosylation is found at asparagine 337, asparagine 344, asparagine 353, asparagine 379, asparagine 384, asparagine 397, asparagine 410, asparagine 421, asparagine 466, and asparagine 481. The LRR 13; degenerate repeat unit spans residues 378–397; that stretch reads INLSAWNNSFTGDIPLSVCN. LRR repeat units lie at residues 398–419, 420–443, 445–467, 469–491, 492–516, 519–543, 588–612, 613–636, 637–660, and 662–685; these read RTSLDVLDLSYNNFTGSIPPCM, GNFTIVNLRKNKLEGNIPDEFYSG, LTQTLDVGYNQLTGELPRSLLNC, FIRFLSVDHNRINDSFPLWLKAL, PNLKVLTLRSNSFHGPMSPPDDQSS, FPKLQILEISHNRFTGSLPTNYFAN, LTFYSAIDFSGNKLEGEIPESIGLL, KTLIALNLSNNSFTGHIPMSFANV, TELESLDLSGNKLSGEIPQELGRL, and YLAYIDVSDNQLTGKIPQGTQIIG. N-linked (GlcNAc...) asparagine glycosylation occurs at asparagine 543. N-linked (GlcNAc...) asparagine glycans are attached at residues asparagine 619, asparagine 622, and asparagine 635. Residues 730–750 traverse the membrane as a helical segment; the sequence is AAIGYGPGVLFGLAIGHVVAL. Residues 751–771 lie on the Cytoplasmic side of the membrane; that stretch reads YKPGWFIKNNGQNRLRGIRHP.

The protein belongs to the RLP family.

It is found in the cell membrane. The chain is Receptor like protein 22 from Arabidopsis thaliana (Mouse-ear cress).